The primary structure comprises 430 residues: Tyrosine--tRNA ligase (430 aa).

Residue Y32 coordinates L-tyrosine. The 'HIGH' region signature appears at 37-46 (PTADSLHIGH). L-tyrosine is bound by residues Y172 and Q176. The 'KMSKS' region signature appears at 232–236 (KFGKT). K235 contacts ATP. In terms of domain architecture, S4 RNA-binding spans 362–430 (ISLVDLLADA…KKSYYLIIVE (69 aa)).

It belongs to the class-I aminoacyl-tRNA synthetase family. TyrS type 1 subfamily. As to quaternary structure, homodimer.

The protein resides in the cytoplasm. It carries out the reaction tRNA(Tyr) + L-tyrosine + ATP = L-tyrosyl-tRNA(Tyr) + AMP + diphosphate + H(+). Functionally, catalyzes the attachment of tyrosine to tRNA(Tyr) in a two-step reaction: tyrosine is first activated by ATP to form Tyr-AMP and then transferred to the acceptor end of tRNA(Tyr). The polypeptide is Tyrosine--tRNA ligase (Porphyromonas gingivalis (strain ATCC BAA-308 / W83)).